A 281-amino-acid polypeptide reads, in one-letter code: Pantothenate synthetase (281 aa).

An ATP-binding site is contributed by 30–37 (MGNLHQGH). Catalysis depends on histidine 37, which acts as the Proton donor. Glutamine 61 is a binding site for (R)-pantoate. Glutamine 61 is a beta-alanine binding site. 149–152 (GRKD) contributes to the ATP binding site. Glutamine 155 lines the (R)-pantoate pocket. Residues isoleucine 178 and 186–189 (MSSR) contribute to the ATP site.

It belongs to the pantothenate synthetase family. As to quaternary structure, homodimer.

Its subcellular location is the cytoplasm. The enzyme catalyses (R)-pantoate + beta-alanine + ATP = (R)-pantothenate + AMP + diphosphate + H(+). It functions in the pathway cofactor biosynthesis; (R)-pantothenate biosynthesis; (R)-pantothenate from (R)-pantoate and beta-alanine: step 1/1. Its function is as follows. Catalyzes the condensation of pantoate with beta-alanine in an ATP-dependent reaction via a pantoyl-adenylate intermediate. The sequence is that of Pantothenate synthetase from Shewanella denitrificans (strain OS217 / ATCC BAA-1090 / DSM 15013).